Reading from the N-terminus, the 267-residue chain is Hydroxyethylthiazole kinase (267 aa).

Residue methionine 42 coordinates substrate. ATP-binding residues include arginine 118 and serine 164. Alanine 191 is a binding site for substrate.

It belongs to the Thz kinase family. The cofactor is Mg(2+).

It catalyses the reaction 5-(2-hydroxyethyl)-4-methylthiazole + ATP = 4-methyl-5-(2-phosphooxyethyl)-thiazole + ADP + H(+). Its pathway is cofactor biosynthesis; thiamine diphosphate biosynthesis; 4-methyl-5-(2-phosphoethyl)-thiazole from 5-(2-hydroxyethyl)-4-methylthiazole: step 1/1. Catalyzes the phosphorylation of the hydroxyl group of 4-methyl-5-beta-hydroxyethylthiazole (THZ). In Pasteurella multocida (strain Pm70), this protein is Hydroxyethylthiazole kinase.